The primary structure comprises 207 residues: NADH-ubiquinone oxidoreductase chain 6 (207 aa).

5 helical membrane passes run 1-21, 28-48, 50-70, 88-108, and 158-178; these read MDFL…LVIQ, SVLF…LLGL, FFAL…FLFV, YLPV…ILID, and FYFF…AIVL.

The protein belongs to the complex I subunit 6 family.

The protein resides in the mitochondrion membrane. It catalyses the reaction a ubiquinone + NADH + 5 H(+)(in) = a ubiquinol + NAD(+) + 4 H(+)(out). In terms of biological role, core subunit of the mitochondrial membrane respiratory chain NADH dehydrogenase (Complex I) that is believed to belong to the minimal assembly required for catalysis. Complex I functions in the transfer of electrons from NADH to the respiratory chain. The immediate electron acceptor for the enzyme is believed to be ubiquinone. In Prototheca wickerhamii, this protein is NADH-ubiquinone oxidoreductase chain 6 (ND6).